Consider the following 313-residue polypeptide: tRNA dimethylallyltransferase (313 aa).

Residue 17–24 (GPTASGKT) participates in ATP binding. 19–24 (TASGKT) lines the substrate pocket. 4 interaction with substrate tRNA regions span residues 42-45 (DSAL), 166-170 (QRLSR), 247-252 (RCVGYR), and 280-287 (KRQITWLR).

It belongs to the IPP transferase family. Monomer. The cofactor is Mg(2+).

It catalyses the reaction adenosine(37) in tRNA + dimethylallyl diphosphate = N(6)-dimethylallyladenosine(37) in tRNA + diphosphate. Catalyzes the transfer of a dimethylallyl group onto the adenine at position 37 in tRNAs that read codons beginning with uridine, leading to the formation of N6-(dimethylallyl)adenosine (i(6)A). This is tRNA dimethylallyltransferase from Proteus mirabilis (strain HI4320).